The sequence spans 711 residues: Interferon-induced GTP-binding protein Mx2 (711 aa).

Disordered stretches follow at residues 1–26 and 62–88; these read MPKP…HKEM and MLTL…NLYS. Low complexity predominate over residues 66–82; it reads SPQQPGGKSGQQTSKGP. Residues 112–383 form the Dynamin-type G domain; it reads DLALPTIAVI…LIGHISKSLP (272 aa). The G1 motif stretch occupies residues 122-129; sequence GDQSSGKS. GTP is bound at residue 122–129; it reads GDQSSGKS. The G2 motif stretch occupies residues 147-149; that stretch reads ITR. Residues 221 to 224 form a G3 motif region; sequence DLPG. GTP contacts are provided by residues 221–225 and 290–293; these read DLPGI and TKPD. The interval 290–293 is G4 motif; sequence TKPD. A G5 motif region spans residues 322-325; it reads KCRG. The 92-residue stretch at 619–710 folds into the GED domain; sequence ITEIGVHVNA…TLSKFAQSLQ (92 aa).

Belongs to the TRAFAC class dynamin-like GTPase superfamily. Dynamin/Fzo/YdjA family. Ubiquitous.

It is found in the cytoplasm. The protein resides in the nucleus. In terms of biological role, interferon-induced dynamin-like GTPase with antiviral activity against influenza virus A (FLUAV). This is Interferon-induced GTP-binding protein Mx2 (MX2) from Sus scrofa (Pig).